The following is a 305-amino-acid chain: Achromobactin-binding periplasmic protein (305 aa).

The signal sequence occupies residues 1–29 (MNEYLVSRRRLLRLSLSLLPLGLGRPALA). In terms of domain architecture, Fe/B12 periplasmic-binding spans 37–302 (RVITLFQGAT…DIARVTGIAG (266 aa)).

The protein belongs to the bacterial solute-binding protein 8 family.

The protein resides in the periplasm. In terms of biological role, binds citrate- or chloride-dependent Fe(3+); part of the binding-protein-dependent transport system CbrABCD for uptake of the siderophore achromobactin. The polypeptide is Achromobactin-binding periplasmic protein (cbrA) (Dickeya dadantii (strain 3937) (Erwinia chrysanthemi (strain 3937))).